The sequence spans 166 residues: Putative 4-hydroxy-4-methyl-2-oxoglutarate aldolase (166 aa).

Residues 74 to 77 (GDQI) and arginine 96 contribute to the substrate site. Aspartate 97 provides a ligand contact to a divalent metal cation.

Belongs to the class II aldolase/RraA-like family. Homotrimer. A divalent metal cation serves as cofactor.

The enzyme catalyses 4-hydroxy-4-methyl-2-oxoglutarate = 2 pyruvate. It catalyses the reaction oxaloacetate + H(+) = pyruvate + CO2. In terms of biological role, catalyzes the aldol cleavage of 4-hydroxy-4-methyl-2-oxoglutarate (HMG) into 2 molecules of pyruvate. Also contains a secondary oxaloacetate (OAA) decarboxylase activity due to the common pyruvate enolate transition state formed following C-C bond cleavage in the retro-aldol and decarboxylation reactions. This is Putative 4-hydroxy-4-methyl-2-oxoglutarate aldolase from Xanthomonas campestris pv. campestris (strain 8004).